We begin with the raw amino-acid sequence, 115 residues long: Double-headed protease inhibitor, submandibular gland (115 aa).

Kazal-like domains are found at residues 6 to 66 and 67 to 115; these read IGRE…ACDI and ECTE…HGEC. Intrachain disulfides connect C12/C46, C24/C43, C32/C64, C68/C97, C75/C94, and C83/C115.

The protein localises to the secreted. In terms of biological role, this inhibitor is composed of two homologous actively inhibiting halves: one which inhibits trypsin, the other which inhibits elastase. This is Double-headed protease inhibitor, submandibular gland from Canis lupus familiaris (Dog).